The following is a 453-amino-acid chain: Tubulin beta-2 chain (453 aa).

Residues Q11, E71, S140, G144, T145, G146, N206, and N228 each contribute to the GTP site. E71 is a binding site for Mg(2+).

The protein belongs to the tubulin family. Dimer of alpha and beta chains. A typical microtubule is a hollow water-filled tube with an outer diameter of 25 nm and an inner diameter of 15 nM. Alpha-beta heterodimers associate head-to-tail to form protofilaments running lengthwise along the microtubule wall with the beta-tubulin subunit facing the microtubule plus end conferring a structural polarity. Microtubules usually have 13 protofilaments but different protofilament numbers can be found in some organisms and specialized cells. It depends on Mg(2+) as a cofactor.

The protein resides in the cytoplasm. The protein localises to the cytoskeleton. Tubulin is the major constituent of microtubules, a cylinder consisting of laterally associated linear protofilaments composed of alpha- and beta-tubulin heterodimers. Microtubules grow by the addition of GTP-tubulin dimers to the microtubule end, where a stabilizing cap forms. Below the cap, tubulin dimers are in GDP-bound state, owing to GTPase activity of alpha-tubulin. In Geotrichum candidum (Oospora lactis), this protein is Tubulin beta-2 chain.